The following is a 1009-amino-acid chain: Anillin-like protein 2 (1009 aa).

3 disordered regions span residues Met-1–Arg-29, Phe-272–Val-295, and Gly-539–Val-558. The segment covering Tyr-542 to Leu-557 has biased composition (polar residues). Residues Ser-626–Ile-657 adopt a coiled-coil conformation. In terms of domain architecture, PH spans Asp-892–Phe-1005.

In terms of tissue distribution, localizes to the surface of the rachis.

Required to maintain the structure of the rachis, the central cytoplasmic core of the syncytial adult gonad. Failure to maintain the rachis leads to premature dissociation of oocytes and thereby impedes oogenesis. The polypeptide is Anillin-like protein 2 (ani-2) (Caenorhabditis elegans).